Reading from the N-terminus, the 166-residue chain is Phosphopantetheine adenylyltransferase (166 aa).

Ser9 contacts substrate. ATP contacts are provided by residues 9–10 and His17; that span reads SF. 3 residues coordinate substrate: Lys41, Thr74, and Arg88. ATP is bound by residues 89-91, Glu99, and 124-130; these read GLR and DSFISSS.

Belongs to the bacterial CoaD family. As to quaternary structure, homohexamer. Mg(2+) serves as cofactor.

Its subcellular location is the cytoplasm. The enzyme catalyses (R)-4'-phosphopantetheine + ATP + H(+) = 3'-dephospho-CoA + diphosphate. It participates in cofactor biosynthesis; coenzyme A biosynthesis; CoA from (R)-pantothenate: step 4/5. Its function is as follows. Reversibly transfers an adenylyl group from ATP to 4'-phosphopantetheine, yielding dephospho-CoA (dPCoA) and pyrophosphate. This is Phosphopantetheine adenylyltransferase from Lactobacillus johnsonii (strain CNCM I-12250 / La1 / NCC 533).